The chain runs to 288 residues: MKGSTVHTKWQAYCRLMRIDKPIGSLLLLWPTLWALWLAGRGIPEAKILVVFVLGVFFMRAAGCVVNDYADRHIDGFVKRTASRPLPSGTISEKESKILFVVLILLSFGLVLTLNSMTIWLSLAALALAWIYPFMKRVTHLPQVVLGAAFGWSIPMGFAAVSESLPLVCWLLLLANICWTVAYDTQYAMVDRDDDLRIGVKSTAILFGQHDKLIIGLLQLATLLLMVAIGWLMNLGGAFYWSILLAGALFTHQQKMIAQREREPCFRAFLNNNYVGLVLFLGILISYW.

The next 8 membrane-spanning stretches (helical) occupy residues 23-43 (IGSL…GRGI), 46-66 (AKIL…GCVV), 98-118 (ILFV…NSMT), 141-161 (LPQV…FAAV), 163-183 (ESLP…TVAY), 213-233 (LIIG…GWLM), 234-254 (NLGG…THQQ), and 268-288 (AFLN…ISYW).

This sequence belongs to the UbiA prenyltransferase family. Mg(2+) is required as a cofactor.

Its subcellular location is the cell inner membrane. It carries out the reaction all-trans-octaprenyl diphosphate + 4-hydroxybenzoate = 4-hydroxy-3-(all-trans-octaprenyl)benzoate + diphosphate. It functions in the pathway cofactor biosynthesis; ubiquinone biosynthesis. In terms of biological role, catalyzes the prenylation of para-hydroxybenzoate (PHB) with an all-trans polyprenyl group. Mediates the second step in the final reaction sequence of ubiquinone-8 (UQ-8) biosynthesis, which is the condensation of the polyisoprenoid side chain with PHB, generating the first membrane-bound Q intermediate 3-octaprenyl-4-hydroxybenzoate. This Yersinia pestis bv. Antiqua (strain Antiqua) protein is 4-hydroxybenzoate octaprenyltransferase.